The following is a 135-amino-acid chain: 6-pyruvoyl tetrahydrobiopterin synthase (135 aa).

H17 provides a ligand contact to Zn(2+). C36 acts as the Proton acceptor in catalysis. Positions 40 and 42 each coordinate Zn(2+). Residues H81 and E124 each act as charge relay system in the active site.

It belongs to the PTPS family. In terms of assembly, homohexamer formed of two homotrimers in a head to head fashion. Zn(2+) serves as cofactor.

It carries out the reaction 7,8-dihydroneopterin 3'-triphosphate = 6-pyruvoyl-5,6,7,8-tetrahydropterin + triphosphate + H(+). The protein operates within cofactor biosynthesis; tetrahydrobiopterin biosynthesis; tetrahydrobiopterin from 7,8-dihydroneopterin triphosphate: step 1/3. In terms of biological role, involved in the biosynthesis of tetrahydrobiopterin, an essential cofactor of aromatic amino acid hydroxylases. Catalyzes the transformation of 7,8-dihydroneopterin triphosphate into 6-pyruvoyl tetrahydropterin. In Dictyostelium discoideum (Social amoeba), this protein is 6-pyruvoyl tetrahydrobiopterin synthase (ptsA).